Consider the following 131-residue polypeptide: Profilin-3 (131 aa).

This sequence belongs to the profilin family. Occurs in many kinds of cells as a complex with monomeric actin in a 1:1 ratio.

It is found in the cytoplasm. Its subcellular location is the cytoskeleton. Functionally, binds to actin and affects the structure of the cytoskeleton. At high concentrations, profilin prevents the polymerization of actin, whereas it enhances it at low concentrations. By binding to PIP2, it inhibits the formation of IP3 and DG. This is Profilin-3 from Lilium longiflorum (Trumpet lily).